Here is a 654-residue protein sequence, read N- to C-terminus: Biotin-dependent 3-methylcrotonyl-coenzyme A carboxylase alpha1 subunit (654 aa).

Positions 1–448 (MFDTVLVANR…DTAVLDERSA (448 aa)) constitute a Biotin carboxylation domain. The region spanning 120-319 (KNAVAAFDVP…LVEWQLRVGA (200 aa)) is the ATP-grasp domain. ATP is bound at residue 148-209 (AAEVGYPVLI…ERFVLRPRHI (62 aa)). Glu-275, Glu-290, and Asn-292 together coordinate Mg(2+). Residues Glu-275, Glu-290, and Asn-292 each contribute to the Mn(2+) site. A Biotinyl-binding domain is found at 578–653 (HRAVGARPAE…KVEQVLARIK (76 aa)). Residue Lys-620 is modified to N6-biotinyllysine.

The biotin-dependent acyl-CoA carboxylase complex is composed of AccA1, which contains the biotin carboxylase (BC) and biotin carboxyl carrier protein (BCCP) domains, and AccD1, which contains the carboxyl transferase (CT) domain. The AccA1/AccD1 complex forms a dodecamer. The cofactor is Mg(2+). It depends on Mn(2+) as a cofactor. Biotin is required as a cofactor.

The enzyme catalyses N(6)-biotinyl-L-lysyl-[protein] + hydrogencarbonate + ATP = N(6)-carboxybiotinyl-L-lysyl-[protein] + ADP + phosphate + H(+). The protein operates within amino-acid degradation; L-leucine degradation. Functionally, component of a biotin-dependent acyl-CoA carboxylase complex. This subunit catalyzes the ATP-dependent carboxylation of the biotin carried by the biotin carboxyl carrier (BCC) domain, resulting in the formation of carboxyl biotin. When associated with the beta1 subunit AccD1, is involved in branched amino-acid catabolism with methylcrotonyl coenzyme A as the substrate. This chain is Biotin-dependent 3-methylcrotonyl-coenzyme A carboxylase alpha1 subunit (accA1), found in Mycobacterium bovis (strain ATCC BAA-935 / AF2122/97).